Reading from the N-terminus, the 270-residue chain is DNA-directed RNA polymerase subunit Rpo3 (270 aa).

3 residues coordinate [3Fe-4S] cluster: cysteine 206, cysteine 209, and cysteine 212.

The protein belongs to the archaeal Rpo3/eukaryotic RPB3 RNA polymerase subunit family. Part of the RNA polymerase complex. Requires [3Fe-4S] cluster as cofactor.

Its subcellular location is the cytoplasm. It catalyses the reaction RNA(n) + a ribonucleoside 5'-triphosphate = RNA(n+1) + diphosphate. Functionally, DNA-dependent RNA polymerase (RNAP) catalyzes the transcription of DNA into RNA using the four ribonucleoside triphosphates as substrates. This Methanosphaera stadtmanae (strain ATCC 43021 / DSM 3091 / JCM 11832 / MCB-3) protein is DNA-directed RNA polymerase subunit Rpo3.